A 310-amino-acid chain; its full sequence is Ribosomal RNA small subunit methyltransferase H (310 aa).

S-adenosyl-L-methionine is bound by residues glycine 33–histidine 35, aspartate 52, phenylalanine 79, aspartate 98, and glutamine 105.

Belongs to the methyltransferase superfamily. RsmH family.

Its subcellular location is the cytoplasm. The enzyme catalyses cytidine(1402) in 16S rRNA + S-adenosyl-L-methionine = N(4)-methylcytidine(1402) in 16S rRNA + S-adenosyl-L-homocysteine + H(+). Functionally, specifically methylates the N4 position of cytidine in position 1402 (C1402) of 16S rRNA. This chain is Ribosomal RNA small subunit methyltransferase H, found in Campylobacter jejuni subsp. jejuni serotype O:6 (strain 81116 / NCTC 11828).